Consider the following 457-residue polypeptide: uncharacterized protein (457 aa).

The next 2 helical transmembrane spans lie at 1-21 (MVSSLASNIILALVVVLMTLL) and 250-270 (ILIVTPGAGVGGLSHTLATTF).

The protein resides in the membrane. This is an uncharacterized protein from Saccharomyces cerevisiae (strain ATCC 204508 / S288c) (Baker's yeast).